The chain runs to 473 residues: Glutamate--tRNA ligase 2 (473 aa).

Positions Pro11–Gly21 match the 'HIGH' region motif. A compositionally biased stretch (basic and acidic residues) spans Lys113 to Ser133. The disordered stretch occupies residues Lys113–Pro136. Residues Lys240–Arg244 carry the 'KMSKS' region motif. Lys243 is a binding site for ATP.

Belongs to the class-I aminoacyl-tRNA synthetase family. Glutamate--tRNA ligase type 1 subfamily. Monomer.

The protein resides in the cytoplasm. The enzyme catalyses tRNA(Glu) + L-glutamate + ATP = L-glutamyl-tRNA(Glu) + AMP + diphosphate. Catalyzes the attachment of glutamate to tRNA(Glu) in a two-step reaction: glutamate is first activated by ATP to form Glu-AMP and then transferred to the acceptor end of tRNA(Glu). This Brucella suis biovar 1 (strain 1330) protein is Glutamate--tRNA ligase 2.